Reading from the N-terminus, the 233-residue chain is Low affinity immunoglobulin gamma Fc region receptor III-B (233 aa).

A signal peptide spans 1 to 16; it reads MWQLLLPTALLLLVSA. 2 consecutive Ig-like C2-type domains span residues 40–96 and 121–179; these read KDSV…LSTL and EDPI…VGSK. The cysteines at positions 47 and 89 are disulfide-linked. N-linked (GlcNAc...) asparagine glycosylation is found at Asn-56, Asn-63, Asn-82, and Asn-92. A disulfide bridge connects residues Cys-128 and Cys-172. Asn-180 and Asn-187 each carry an N-linked (GlcNAc...) asparagine glycan. Residue Ser-200 is the site of GPI-anchor amidated serine attachment. The propeptide at 201–233 is removed in mature form; that stretch reads SFSPPGYQVSFCLVMVLLFAVDTGLYFSVKTNI.

As to quaternary structure, monomer. Interacts with INPP5D/SHIP1. Glycosylated. Glycosylation plays an inhibitory role in the interaction with IgG3. Post-translationally, the soluble form is produced by a proteolytic cleavage. As to expression, expressed specifically by polymorphonuclear leukocytes (neutrophils). Also expressed by stimulated eosinophils.

Its subcellular location is the cell membrane. It localises to the secreted. Functionally, receptor for the Fc region of immunoglobulins gamma. Low affinity receptor. Binds complexed or aggregated IgG and also monomeric IgG. Contrary to III-A, is not capable to mediate antibody-dependent cytotoxicity and phagocytosis. May serve as a trap for immune complexes in the peripheral circulation which does not activate neutrophils. The chain is Low affinity immunoglobulin gamma Fc region receptor III-B (FCGR3B) from Homo sapiens (Human).